Consider the following 1481-residue polypeptide: Nucleoporin NUP159 (1481 aa).

WD repeat units follow at residues 106–146 and 201–241; these read PLPL…QGNT and TLRS…AHIP. PXFG repeat units lie at residues 483-486, 493-496, 519-522, 524-527, 532-535, and 559-562; these read PTFG, PAFG, and PSFG. Over residues 607–616 the composition is skewed to low complexity; that stretch reads GSSIFSSKPG. 2 disordered regions span residues 607-647 and 662-991; these read GSSI…PAFG and TAAH…SLGG. One copy of the PXFG 7 repeat lies at 644 to 647; the sequence is PAFG. Positions 663 to 677 are enriched in basic and acidic residues; the sequence is AAHDIEKPKEGESKS. 2 stretches are compositionally biased toward polar residues: residues 724–734 and 741–763; these read FESTTPTTTPA and KTTT…SSMP. The segment covering 773 to 794 has biased composition (basic and acidic residues); it reads SAEKPKSIFDTLKPKEESKENL. The span at 814–833 shows a compositional bias: low complexity; the sequence is PGSSSSESAESSPGAAAKAA. 2 stretches are compositionally biased toward basic and acidic residues: residues 837–850 and 862–877; these read GNDE…ELAP and VKAK…KAEE. The segment covering 903–955 has biased composition (acidic residues); sequence ASEEEQGQAEEEEAESGEEEEEEEEEGEGEEEEEEEEEEEEEEEEGEEGEEQS. 2 coiled-coil regions span residues 903–957 and 1233–1318; these read ASEE…QSEA and MAAI…AARG. The Bipartite nuclear localization signal signature appears at 1345–1352; it reads EKRSGDID. Disordered regions lie at residues 1385 to 1404 and 1414 to 1443; these read ATPG…TPQS and GSVG…MYTA. A Bipartite nuclear localization signal motif is present at residues 1435–1442; sequence KKKLSMYT.

In terms of assembly, component of the nuclear pore complex (NPC). NPC constitutes the exclusive means of nucleocytoplasmic transport. NPCs allow the passive diffusion of ions and small molecules and the active, nuclear transport receptor-mediated bidirectional transport of macromolecules such as proteins, RNAs, ribonucleoparticles (RNPs), and ribosomal subunits across the nuclear envelope. Due to its 8-fold rotational symmetry, all subunits are present with 8 copies or multiples thereof.

The protein localises to the nucleus. The protein resides in the nuclear pore complex. It localises to the nucleus membrane. Functionally, functions as a component of the nuclear pore complex (NPC). NPC components, collectively referred to as nucleoporins (NUPs), can play the role of both NPC structural components and of docking or interaction partners for transiently associated nuclear transport factors. Active directional transport is assured by both, a Phe-Gly (FG) repeat affinity gradient for these transport factors across the NPC and a transport cofactor concentration gradient across the nuclear envelope (GSP1 and GSP2 GTPases associated predominantly with GTP in the nucleus, with GDP in the cytoplasm). NUP159 plays an important role in several nuclear export pathways including poly(A)+ RNA, pre-ribosome, and protein export. This Chaetomium thermophilum (strain DSM 1495 / CBS 144.50 / IMI 039719) (Thermochaetoides thermophila) protein is Nucleoporin NUP159 (NUP159).